The primary structure comprises 576 residues: MTPVTTKTIRPEVPPETEKLSLLHGPIDPPLVDLTLGELLELQTYQHGTHECLVIPWTGARWTYNDLNQQSSWLAHALLDLGIGVGDRVGIMAGNCEQYAAVFFAAAKIGAILVILNNTYTPTEAMYGIQFSECKVVFTTRKIGRMDNTRLLGDLDNLDRGPKVVMLRGESANYATYDDLIESAMGKSHEKLYEAMRRVSPHQVVNLQFTSGTTGLPKAAMLTHHNLVNNSRFIGDRMRLTSADVLCCPPPLFHCFGLVLGLLAIVTHGGKIVYPAEVFDIAATLRAISDENCTAVHGVPAMFDSLFQAEFPANFRCDRLRTGIIAGAPVPRYLMELLVEKFGMTEFTSSYGLTEASPTCFNAFTDDSIDTRLTTVGTLMPHAHAKIVDRDGNIVPVGVRGELCIGGYQLQAGYWNNSAKTAEVMVRDATGVLWLHTGDEAVFDEHGYCSITGRFKDIIIRGGENIYPLEIEERLLAHPAISRAIVVGLKSNHYGEVVGAFLERAPTAAKKPSDQELRDWVRKRLGGHKSPAHLFWLGEGGVPADVPLTGSGKVKKFEMAKLGDELLRKETPVAKL.

The PTS2-type peroxisomal targeting signal motif lies at 3–11 (PVTTKTIRP). Aspartate 439, arginine 454, and lysine 553 together coordinate ATP.

Belongs to the ATP-dependent AMP-binding enzyme family.

Its subcellular location is the peroxisome. The protein operates within siderophore biosynthesis. Functionally, acyl-CoA ligase; part of the gene cluster that mediates the biosynthesis of at least 11 siderophores, including beauverichelin A, dimerumic acid (DA), Na-dimethyl coprogen (NADC), eleutherazine B, ferricrocin (FC), fusarinine A, fusarinine C (FsC), metachelin A, mevalonolactone, rhodotorulic acid (RA) and tenellin. This cocktail of siderophores for iron metabolism is essential for virulence, and more specifically for the fungal virulence in penetrating through the host cuticle. Siderophore synthesis is also involved in conidial germination under iron-deficient conditions. For biosynthesis of fusarinine C, the transacylase SIDF transfers anhydromevalonyl to N(5)-hydroxyornithine. The required anhydromevalonyl-CoA moiety is derived from mevalonate by CoA ligation and dehydration catalyzed by SIDI and sidH respectively. The sequence is that of Acyl-CoA ligase sidI from Beauveria bassiana (strain ARSEF 2860) (White muscardine disease fungus).